Consider the following 226-residue polypeptide: Glutathione S-transferase kappa 1 (226 aa).

16–18 lines the glutathione pocket; that stretch reads SPY. Lys36 and Lys49 each carry N6-succinyllysine. Asn53 lines the glutathione pocket. Lys68 and Lys74 each carry N6-acetyllysine; alternate. Lys68 and Lys74 each carry N6-succinyllysine; alternate. Lys85 carries the N6-acetyllysine modification. An N6-acetyllysine; alternate mark is found at Lys93 and Lys116. An N6-succinyllysine; alternate mark is found at Lys93 and Lys116. N6-succinyllysine is present on Lys144. N6-acetyllysine; alternate is present on Lys158. The residue at position 158 (Lys158) is an N6-succinyllysine; alternate. Lys165 bears the N6-acetyllysine mark. 2 positions are modified to N6-acetyllysine; alternate: Lys167 and Lys177. N6-succinyllysine; alternate occurs at positions 167 and 177. Leu183 serves as a coordination point for glutathione. Lys193 bears the N6-succinyllysine mark. A glutathione-binding site is contributed by 200-201; it reads SD.

It belongs to the GST superfamily. Kappa family. Homodimer.

The protein localises to the mitochondrion matrix. The catalysed reaction is RX + glutathione = an S-substituted glutathione + a halide anion + H(+). Functionally, glutathione S-transferase that catalyzes the conjugation of glutathione to exogenous and endogenous compounds. The protein is Glutathione S-transferase kappa 1 (Gstk1) of Rattus norvegicus (Rat).